The chain runs to 103 residues: UPF0235 protein Dole_0289 (103 aa).

The protein belongs to the UPF0235 family.

This chain is UPF0235 protein Dole_0289, found in Desulfosudis oleivorans (strain DSM 6200 / JCM 39069 / Hxd3) (Desulfococcus oleovorans).